Reading from the N-terminus, the 393-residue chain is NAD(P)H-quinone oxidoreductase subunit H, chloroplastic (393 aa).

The protein belongs to the complex I 49 kDa subunit family. As to quaternary structure, NDH is composed of at least 16 different subunits, 5 of which are encoded in the nucleus.

The protein resides in the plastid. It is found in the chloroplast thylakoid membrane. The catalysed reaction is a plastoquinone + NADH + (n+1) H(+)(in) = a plastoquinol + NAD(+) + n H(+)(out). It carries out the reaction a plastoquinone + NADPH + (n+1) H(+)(in) = a plastoquinol + NADP(+) + n H(+)(out). Functionally, NDH shuttles electrons from NAD(P)H:plastoquinone, via FMN and iron-sulfur (Fe-S) centers, to quinones in the photosynthetic chain and possibly in a chloroplast respiratory chain. The immediate electron acceptor for the enzyme in this species is believed to be plastoquinone. Couples the redox reaction to proton translocation, and thus conserves the redox energy in a proton gradient. This Jasminum nudiflorum (Winter jasmine) protein is NAD(P)H-quinone oxidoreductase subunit H, chloroplastic.